Consider the following 515-residue polypeptide: ATP-dependent RNA helicase DBP3 (515 aa).

A disordered region spans residues 1–67 (MAKRPLQTEA…SDSRYLPTPE (67 aa)). The Q motif motif lies at 100–127 (TSFSFLPESSNDLYLPLEKFSSPTPIQA). The Helicase ATP-binding domain maps to 130-306 (WPLAFAGRDL…ASFTKNPVTV (177 aa)). 143–150 (AETGSGKT) lines the ATP pocket. A DEAD box motif is present at residues 252-255 (DEAD). The Helicase C-terminal domain maps to 335–484 (RLLELLRRYQ…DVPESLLKFG (150 aa)).

The protein belongs to the DEAD box helicase family. DDX5/DBP2 subfamily.

It localises to the nucleus. Its subcellular location is the nucleolus. It carries out the reaction ATP + H2O = ADP + phosphate + H(+). Its function is as follows. ATP-dependent RNA helicase required for 60S ribosomal subunit synthesis. Involved in efficient pre-rRNA processing, predominantly at site A3, which is necessary for the normal formation of 25S and 5.8S rRNAs. The protein is ATP-dependent RNA helicase DBP3 (DBP3) of Coccidioides immitis (strain RS) (Valley fever fungus).